The following is a 68-amino-acid chain: Purkinje cell protein 4-like protein 1 (68 aa).

A compositionally biased stretch (polar residues) spans 1 to 16 (MSELNTKTPPAANQAS). The disordered stretch occupies residues 1-42 (MSELNTKTPPAANQASDPEEKGKPGSIKKAEEEEEIDIDLTA). Position 8 is a phosphothreonine (Thr-8). Positions 18–31 (PEEKGKPGSIKKAE) are enriched in basic and acidic residues. The IQ domain maps to 45–68 (TEKAALAIQGKFRRFQKRKKDSSS).

Belongs to the PCP4 family. As to expression, expressed in laminar and nuclear structures of the CNS.

The sequence is that of Purkinje cell protein 4-like protein 1 (Pcp4l1) from Mus musculus (Mouse).